Here is a 144-residue protein sequence, read N- to C-terminus: Phosphomevalonate dehydratase small subunit (144 aa).

Ser-65 serves as the catalytic Proton acceptor.

Belongs to the AcnX type II small subunit family. In terms of assembly, heterodimer composed of a large subunit (PMDh-L) and a small subunit (PMDh-S).

It carries out the reaction (R)-5-phosphomevalonate = (2E)-3-methyl-5-phosphooxypent-2-enoate + H2O. It functions in the pathway isoprenoid biosynthesis; isopentenyl diphosphate biosynthesis via mevalonate pathway. Functionally, component of a hydro-lyase that catalyzes the dehydration of mevalonate 5-phosphate (MVA5P) to form trans-anhydromevalonate 5-phosphate (tAHMP). Involved in the archaeal mevalonate (MVA) pathway, which provides fundamental precursors for isoprenoid biosynthesis, such as isopentenyl diphosphate (IPP) and dimethylallyl diphosphate (DMAPP). This is Phosphomevalonate dehydratase small subunit from Methanosarcina acetivorans (strain ATCC 35395 / DSM 2834 / JCM 12185 / C2A).